The primary structure comprises 495 residues: Glycerol kinase (495 aa).

Residue T11 coordinates ADP. The ATP site is built by T11, T12, and S13. T11 contacts sn-glycerol 3-phosphate. Residue R15 coordinates ADP. Residues R81, E82, Y133, and D242 each contribute to the sn-glycerol 3-phosphate site. R81, E82, Y133, D242, and Q243 together coordinate glycerol. ADP contacts are provided by T264 and G307. ATP-binding residues include T264, G307, Q311, and G408. Residues G408 and N412 each coordinate ADP.

It belongs to the FGGY kinase family.

It catalyses the reaction glycerol + ATP = sn-glycerol 3-phosphate + ADP + H(+). It functions in the pathway polyol metabolism; glycerol degradation via glycerol kinase pathway; sn-glycerol 3-phosphate from glycerol: step 1/1. Inhibited by fructose 1,6-bisphosphate (FBP). Functionally, key enzyme in the regulation of glycerol uptake and metabolism. Catalyzes the phosphorylation of glycerol to yield sn-glycerol 3-phosphate. This chain is Glycerol kinase, found in Rhodospirillum rubrum (strain ATCC 11170 / ATH 1.1.1 / DSM 467 / LMG 4362 / NCIMB 8255 / S1).